The primary structure comprises 61 residues: Insect toxin BsIT3 (61 aa).

The region spanning 1–61 is the LCN-type CS-alpha/beta domain; the sequence is DGYILNSKGC…RWTSSKNKCN (61 aa). 4 disulfide bridges follow: Cys10/Cys60, Cys14/Cys35, Cys21/Cys42, and Cys25/Cys44.

This sequence belongs to the long (4 C-C) scorpion toxin superfamily. Sodium channel inhibitor family. Beta subfamily. In terms of tissue distribution, expressed by the venom gland.

It is found in the secreted. Depressant insect beta-toxins cause a transient contraction paralysis followed by a slow flaccid paralysis. They bind voltage-independently at site-4 of sodium channels (Nav) and shift the voltage of activation toward more negative potentials thereby affecting sodium channel activation and promoting spontaneous and repetitive firing. This toxin is active only on insects. In Hottentotta tamulus sindicus (Scorpion), this protein is Insect toxin BsIT3.